Reading from the N-terminus, the 258-residue chain is MMNPLIIKLGGVLLDSEEALERLFSALVNYRESHQRPLVIVHGGGCVVDELMKGLNLPVKKKNGLRVTPADQIDIITGALAGTANKTLLAWAKKHQIAAVGLFLGDGDSVKVTQLDEEFGHVGLAQPGSPKLINSLLENGYLPVVSSIGVTDEGQLMNVNADQAATALAATLGADLILLSDVSGILDGKGQRIAEMTAAKAEQLIEQGIITDGMIVKVNAALDAARTLGRPVDIASWRYAEQLPALFNGMPMGTRILA.

Substrate-binding positions include 44–45 (GG), R66, and N158. Residues 181-186 (DVSGIL) and 209-211 (IIT) contribute to the ATP site.

Belongs to the acetylglutamate kinase family. ArgB subfamily. Homodimer.

It localises to the cytoplasm. The catalysed reaction is N-acetyl-L-glutamate + ATP = N-acetyl-L-glutamyl 5-phosphate + ADP. It participates in amino-acid biosynthesis; L-arginine biosynthesis; N(2)-acetyl-L-ornithine from L-glutamate: step 2/4. Its function is as follows. Catalyzes the ATP-dependent phosphorylation of N-acetyl-L-glutamate. The polypeptide is Acetylglutamate kinase (Shigella flexneri serotype 5b (strain 8401)).